The primary structure comprises 315 residues: C1GALT1-specific chaperone 1-like protein (315 aa).

The Cytoplasmic segment spans residues Met-1–Ser-8. Residues Phe-9 to Ile-29 form a helical; Signal-anchor for type II membrane protein membrane-spanning segment. The Lumenal segment spans residues His-30–Asp-315. Asn-55 and Asn-301 each carry an N-linked (GlcNAc...) asparagine glycan.

The protein belongs to the glycosyltransferase 31 family. Beta3-Gal-T subfamily.

Its subcellular location is the membrane. The protein is C1GALT1-specific chaperone 1-like protein of Homo sapiens (Human).